We begin with the raw amino-acid sequence, 1228 residues long: DNA-directed RNA polymerase subunit beta (1228 aa).

The protein belongs to the RNA polymerase beta chain family. As to quaternary structure, the RNAP catalytic core consists of 2 alpha, 1 beta, 1 beta' and 1 omega subunit. When a sigma factor is associated with the core the holoenzyme is formed, which can initiate transcription.

The enzyme catalyses RNA(n) + a ribonucleoside 5'-triphosphate = RNA(n+1) + diphosphate. In terms of biological role, DNA-dependent RNA polymerase catalyzes the transcription of DNA into RNA using the four ribonucleoside triphosphates as substrates. This chain is DNA-directed RNA polymerase subunit beta, found in Leptospira biflexa serovar Patoc (strain Patoc 1 / Ames).